Reading from the N-terminus, the 331-residue chain is Probable cytosolic iron-sulfur protein assembly protein Ciao1 (331 aa).

WD repeat units follow at residues 12–51 (GHKGRIWGVAWHPKGNSFASCGEDKAIRIWSQSGNTWTTK), 57–96 (GHKRTIREVRWSPCGEYLASASFDATTAIWSKHECNATLE), 97–136 (GHENEVKSVSWSQSGGLLATCSRDKSVWIWEVAGDDEFEC), 142–181 (AHTQDVKRVVWHPSKEILASASYDNTIKMYAESALDSDWD), 188–227 (SHTSTVWSIDFEADGERLVSCSDDTTLKIWRAYHPGNEAG), 246–285 (QHSRAVYDVSWCKLTGLIASACGDDGIRIFKESSDSKRDE), and 297–331 (AHEQDVNAVEWNPVTAGQLISCSDDGTIKIWKLQE).

Belongs to the WD repeat CIA1 family.

Essential component of the cytosolic iron-sulfur (Fe/S) protein assembly machinery. Required for the maturation of extramitochondrial Fe/S proteins. In Drosophila grimshawi (Hawaiian fruit fly), this protein is Probable cytosolic iron-sulfur protein assembly protein Ciao1.